We begin with the raw amino-acid sequence, 312 residues long: MKTNNEFRPQYLKDFIGKDQLKSNLKIYLNATKRLKSSFDHTLLHGLAGTGKTTLATIIANEMGVDCHMTQGNLLNKPVDIINLLSLIKENDVIFVDEIHACGLAAFETLYSVLEDFCIDISIGKDFNAKMTRLKVPHFTLIGATTMLGKIPEPLEERFGHVFYLSEYETSEIAAIILKNNQIHFQINLNDQEIDLIANSAKGIPRLANRLLKRVVDFKINGFDNIKNIFEKIQIYDFGLEEQDINYLNVLYQQENEIGLKSIAQILRLDQYTIETKIEPYLIQHHFINKNLRGRKITAKGIEFLKNNQLIK.

Residues 1–168 (MKTNNEFRPQ…FGHVFYLSEY (168 aa)) form a large ATPase domain (RuvB-L) region. Residues Arg-8, Gly-49, Lys-52, Thr-53, Thr-54, 115-117 (EDF), Arg-158, Tyr-168, and Arg-206 each bind ATP. Thr-53 contributes to the Mg(2+) binding site. The tract at residues 169 to 234 (ETSEIAAIIL…NIKNIFEKIQ (66 aa)) is small ATPAse domain (RuvB-S). The head domain (RuvB-H) stretch occupies residues 237-312 (DFGLEEQDIN…EFLKNNQLIK (76 aa)). Positions 290 and 295 each coordinate DNA.

It belongs to the RuvB family. Homohexamer. Forms an RuvA(8)-RuvB(12)-Holliday junction (HJ) complex. HJ DNA is sandwiched between 2 RuvA tetramers; dsDNA enters through RuvA and exits via RuvB. An RuvB hexamer assembles on each DNA strand where it exits the tetramer. Each RuvB hexamer is contacted by two RuvA subunits (via domain III) on 2 adjacent RuvB subunits; this complex drives branch migration. In the full resolvosome a probable DNA-RuvA(4)-RuvB(12)-RuvC(2) complex forms which resolves the HJ.

The protein localises to the cytoplasm. The catalysed reaction is ATP + H2O = ADP + phosphate + H(+). The RuvA-RuvB-RuvC complex processes Holliday junction (HJ) DNA during genetic recombination and DNA repair, while the RuvA-RuvB complex plays an important role in the rescue of blocked DNA replication forks via replication fork reversal (RFR). RuvA specifically binds to HJ cruciform DNA, conferring on it an open structure. The RuvB hexamer acts as an ATP-dependent pump, pulling dsDNA into and through the RuvAB complex. RuvB forms 2 homohexamers on either side of HJ DNA bound by 1 or 2 RuvA tetramers; 4 subunits per hexamer contact DNA at a time. Coordinated motions by a converter formed by DNA-disengaged RuvB subunits stimulates ATP hydrolysis and nucleotide exchange. Immobilization of the converter enables RuvB to convert the ATP-contained energy into a lever motion, pulling 2 nucleotides of DNA out of the RuvA tetramer per ATP hydrolyzed, thus driving DNA branch migration. The RuvB motors rotate together with the DNA substrate, which together with the progressing nucleotide cycle form the mechanistic basis for DNA recombination by continuous HJ branch migration. Branch migration allows RuvC to scan DNA until it finds its consensus sequence, where it cleaves and resolves cruciform DNA. In Ureaplasma urealyticum serovar 10 (strain ATCC 33699 / Western), this protein is Holliday junction branch migration complex subunit RuvB.